The sequence spans 75 residues: Metallothionein-like protein 1 (75 aa).

The protein belongs to the metallothionein superfamily. Type 15 family.

Its function is as follows. Metallothioneins have a high content of cysteine residues that bind various heavy metals. The chain is Metallothionein-like protein 1 (MT1B) from Trifolium repens (Creeping white clover).